Reading from the N-terminus, the 354-residue chain is Probable protein phosphatase 2C 69 (354 aa).

Residues 33–279 (SYGYASSAGK…DNITCVVVRF (247 aa)) enclose the PPM-type phosphatase domain. Mn(2+)-binding residues include aspartate 69, glycine 70, aspartate 231, and aspartate 270. The interval 289–354 (HISSSSSKEA…LERNSVTDKV (66 aa)) is disordered. 2 stretches are compositionally biased toward polar residues: residues 309 to 328 (ISSN…PENV) and 336 to 348 (ASRS…LERN).

The protein belongs to the PP2C family. It depends on Mg(2+) as a cofactor. The cofactor is Mn(2+).

The enzyme catalyses O-phospho-L-seryl-[protein] + H2O = L-seryl-[protein] + phosphate. The catalysed reaction is O-phospho-L-threonyl-[protein] + H2O = L-threonyl-[protein] + phosphate. The protein is Probable protein phosphatase 2C 69 of Arabidopsis thaliana (Mouse-ear cress).